Reading from the N-terminus, the 498-residue chain is Glycerol kinase (498 aa).

ADP is bound at residue threonine 12. Positions 12, 13, and 14 each coordinate ATP. A sn-glycerol 3-phosphate-binding site is contributed by threonine 12. Arginine 16 serves as a coordination point for ADP. Residues arginine 82, glutamate 83, tyrosine 134, and aspartate 243 each contribute to the sn-glycerol 3-phosphate site. Glycerol contacts are provided by arginine 82, glutamate 83, tyrosine 134, aspartate 243, and glutamine 244. The ADP site is built by threonine 265 and glycine 308. The ATP site is built by threonine 265, glycine 308, glutamine 312, and glycine 409. The ADP site is built by glycine 409 and asparagine 413.

Belongs to the FGGY kinase family. Homotetramer and homodimer (in equilibrium).

The catalysed reaction is glycerol + ATP = sn-glycerol 3-phosphate + ADP + H(+). Its pathway is polyol metabolism; glycerol degradation via glycerol kinase pathway; sn-glycerol 3-phosphate from glycerol: step 1/1. Its activity is regulated as follows. Activated by phosphorylation and inhibited by fructose 1,6-bisphosphate (FBP). Key enzyme in the regulation of glycerol uptake and metabolism. Catalyzes the phosphorylation of glycerol to yield sn-glycerol 3-phosphate. This chain is Glycerol kinase, found in Clostridium botulinum (strain 657 / Type Ba4).